Reading from the N-terminus, the 336-residue chain is F-box protein PP2-B1 (336 aa).

The segment at 1 to 22 (MEQIHGGDSNSGGGGGGSSRND) is disordered. The span at 9–18 (SNSGGGGGGS) shows a compositional bias: gly residues. The 47-residue stretch at 29–75 (ASRFDALPEDCISKVISHTSPRDACVVASVSKSVKSAAQSDLVWEMF) folds into the F-box domain.

As to quaternary structure, part of a SCF (ASK-cullin-F-box) protein ligase complex. Interacts with SKP1A/ASK1 and SPK1B/ASK2.

It is found in the nucleus. It participates in protein modification; protein ubiquitination. Its function is as follows. Component of SCF(ASK-cullin-F-box) E3 ubiquitin ligase complexes, which may mediate the ubiquitination and subsequent proteasomal degradation of target proteins. This Arabidopsis thaliana (Mouse-ear cress) protein is F-box protein PP2-B1 (PP2B1).